We begin with the raw amino-acid sequence, 259 residues long: Eukaryotic translation initiation factor 3 subunit G-2 (259 aa).

The region spanning 179 to 257 is the RRM domain; the sequence is SAVRISNLSE…LILSVEWSKP (79 aa).

This sequence belongs to the eIF-3 subunit G family. Component of the eukaryotic translation initiation factor 3 (eIF-3) complex. The eIF-3 complex interacts with pix.

It is found in the cytoplasm. RNA-binding component of the eukaryotic translation initiation factor 3 (eIF-3) complex, which is involved in protein synthesis of a specialized repertoire of mRNAs and, together with other initiation factors, stimulates binding of mRNA and methionyl-tRNAi to the 40S ribosome. The eIF-3 complex specifically targets and initiates translation of a subset of mRNAs involved in cell proliferation. This subunit can bind 18S rRNA. The sequence is that of Eukaryotic translation initiation factor 3 subunit G-2 from Drosophila virilis (Fruit fly).